The chain runs to 363 residues: tRNA N6-adenosine threonylcarbamoyltransferase (363 aa).

Residues H121 and H125 each coordinate Fe cation. Substrate-binding positions include 143–147 (LASGG), D176, G189, and N287. D315 is a Fe cation binding site.

The protein belongs to the KAE1 / TsaD family. Fe(2+) is required as a cofactor.

It is found in the cytoplasm. It catalyses the reaction L-threonylcarbamoyladenylate + adenosine(37) in tRNA = N(6)-L-threonylcarbamoyladenosine(37) in tRNA + AMP + H(+). Its function is as follows. Required for the formation of a threonylcarbamoyl group on adenosine at position 37 (t(6)A37) in tRNAs that read codons beginning with adenine. Is involved in the transfer of the threonylcarbamoyl moiety of threonylcarbamoyl-AMP (TC-AMP) to the N6 group of A37, together with TsaE and TsaB. TsaD likely plays a direct catalytic role in this reaction. In Rhodopseudomonas palustris (strain BisB5), this protein is tRNA N6-adenosine threonylcarbamoyltransferase.